The following is a 69-amino-acid chain: Sec-independent protein translocase protein TatA (69 aa).

The helical transmembrane segment at 1–21 threads the bilayer; it reads MGSLSIWHWLIVLAIALLLFG. The tract at residues 41–69 is disordered; that stretch reads KGMNDDEETPPPAQSTTSRTVEHKADESK. The span at 60–69 shows a compositional bias: basic and acidic residues; sequence TVEHKADESK.

Belongs to the TatA/E family. As to quaternary structure, the Tat system comprises two distinct complexes: a TatABC complex, containing multiple copies of TatA, TatB and TatC subunits, and a separate TatA complex, containing only TatA subunits. Substrates initially bind to the TatABC complex, which probably triggers association of the separate TatA complex to form the active translocon.

The protein resides in the cell inner membrane. Its function is as follows. Part of the twin-arginine translocation (Tat) system that transports large folded proteins containing a characteristic twin-arginine motif in their signal peptide across membranes. TatA could form the protein-conducting channel of the Tat system. This Rhizobium rhizogenes (strain K84 / ATCC BAA-868) (Agrobacterium radiobacter) protein is Sec-independent protein translocase protein TatA.